The chain runs to 444 residues: COP9 signalosome complex subunit 2 (444 aa).

The disordered stretch occupies residues Met-1–Asp-31. Positions Ala-255 to Ser-417 constitute a PCI domain.

It belongs to the CSN2 family. As to quaternary structure, component of the CSN complex, probably composed of CSN1b, alien/CSN2, CSN3, CSN4, CSN5, CSN6, CSN7 and CSN8. Interacts with Rpn6. As to expression, expressed during embryonic stages 11-14 in the muscle attachment sites (apodemes); pharynx attachment to the roof of the mouth and in the epidermis of the head for the dorsal and ventral prothoracic pharyngeal muscle attachment. From stage 16 onwards expression is seen in all thoracic and abdominal apodemes.

Its subcellular location is the cytoplasm. The protein localises to the nucleus. Its function is as follows. Component of the COP9 signalosome complex (CSN), a complex involved in various cellular and developmental processes. The CSN complex is an essential regulator of the ubiquitin (Ubl) conjugation pathway by mediating the deneddylation of the cullin subunits of the SCF-type E3 ligase complexes, leading to decrease the Ubl ligase activity of SCF. The CSN complex plays an essential role in oogenesis and embryogenesis and is required for proper photoreceptor R cell differentiation and promote lamina glial cell migration or axon targeting. It also promotes Ubl-dependent degradation of cyclin E (CycE) during early oogenesis. This is COP9 signalosome complex subunit 2 from Drosophila melanogaster (Fruit fly).